Consider the following 270-residue polypeptide: uncharacterized protein (270 aa).

The first 22 residues, 1–22 (MEYIKKIALYMSVLLLIIFIGG), serve as a signal peptide directing secretion. Residue Cys-23 is the site of N-palmitoyl cysteine attachment. Residue Cys-23 is the site of S-diacylglycerol cysteine attachment.

The protein belongs to the staphylococcal tandem lipoprotein family.

The protein resides in the cell membrane. This is an uncharacterized protein from Staphylococcus aureus (strain N315).